A 249-amino-acid polypeptide reads, in one-letter code: Probable transcriptional regulatory protein Rru_A1086 (249 aa).

It belongs to the TACO1 family.

The protein resides in the cytoplasm. The sequence is that of Probable transcriptional regulatory protein Rru_A1086 from Rhodospirillum rubrum (strain ATCC 11170 / ATH 1.1.1 / DSM 467 / LMG 4362 / NCIMB 8255 / S1).